The following is a 120-amino-acid chain: NAD(P)H-quinone oxidoreductase subunit 3, chloroplastic (120 aa).

3 helical membrane passes run 9–29 (IFWA…FISG), 64–84 (MFAL…PWAM), and 88–108 (VLGV…IVGL).

Belongs to the complex I subunit 3 family. NDH is composed of at least 16 different subunits, 5 of which are encoded in the nucleus.

It is found in the plastid. Its subcellular location is the chloroplast thylakoid membrane. The enzyme catalyses a plastoquinone + NADH + (n+1) H(+)(in) = a plastoquinol + NAD(+) + n H(+)(out). It catalyses the reaction a plastoquinone + NADPH + (n+1) H(+)(in) = a plastoquinol + NADP(+) + n H(+)(out). NDH shuttles electrons from NAD(P)H:plastoquinone, via FMN and iron-sulfur (Fe-S) centers, to quinones in the photosynthetic chain and possibly in a chloroplast respiratory chain. The immediate electron acceptor for the enzyme in this species is believed to be plastoquinone. Couples the redox reaction to proton translocation, and thus conserves the redox energy in a proton gradient. The polypeptide is NAD(P)H-quinone oxidoreductase subunit 3, chloroplastic (Lactuca sativa (Garden lettuce)).